The primary structure comprises 426 residues: Putative competence-damage inducible protein (426 aa).

This sequence belongs to the CinA family.

The protein is Putative competence-damage inducible protein of Symbiobacterium thermophilum (strain DSM 24528 / JCM 14929 / IAM 14863 / T).